We begin with the raw amino-acid sequence, 308 residues long: Paired box protein 3 homolog (308 aa).

The segment at residues 13–140 (GQGRVNQLGG…PAIKRLIGNK (128 aa)) is a DNA-binding region (paired). Positions 16 to 72 (RVNQLGGVFINGRPLPIHVRHAIISMAKKGIKPCHISRQLKVSHGAVSKILNRYAET) are PAI subdomain. The RED subdomain stretch occupies residues 92–140 (AVEKEILIACDENPQMSAAELRDWLIHKDICTKGNAPTVPAIKRLIGNK). Positions 168 to 191 (CSKSSSDDEEGSSPSNDASSRRNR) are disordered. The homeobox DNA-binding region spans 187-246 (SRRNRTSFTAEQLDVLENAFRADTYPHANARESISKETGLSEEKIMTWFSNRRARCRKNM).

The protein belongs to the paired homeobox family.

The protein resides in the nucleus. In terms of biological role, transcriptional activator. Regulates the lateral/ventral epidermal cell fate decision. This Caenorhabditis elegans protein is Paired box protein 3 homolog.